The chain runs to 156 residues: Small ribosomal subunit protein uS7 (156 aa).

It belongs to the universal ribosomal protein uS7 family. In terms of assembly, part of the 30S ribosomal subunit. Contacts proteins S9 and S11.

Its function is as follows. One of the primary rRNA binding proteins, it binds directly to 16S rRNA where it nucleates assembly of the head domain of the 30S subunit. Is located at the subunit interface close to the decoding center, probably blocks exit of the E-site tRNA. In Maricaulis maris (strain MCS10) (Caulobacter maris), this protein is Small ribosomal subunit protein uS7.